We begin with the raw amino-acid sequence, 465 residues long: Argininosuccinate lyase (465 aa).

Belongs to the lyase 1 family. Argininosuccinate lyase subfamily.

Its subcellular location is the cytoplasm. It carries out the reaction 2-(N(omega)-L-arginino)succinate = fumarate + L-arginine. It participates in amino-acid biosynthesis; L-arginine biosynthesis; L-arginine from L-ornithine and carbamoyl phosphate: step 3/3. The protein is Argininosuccinate lyase of Desulfatibacillum aliphaticivorans.